The following is a 272-amino-acid chain: Tryptophan synthase alpha chain (272 aa).

Catalysis depends on proton acceptor residues Glu49 and Glu60.

It belongs to the TrpA family. Tetramer of two alpha and two beta chains.

It catalyses the reaction (1S,2R)-1-C-(indol-3-yl)glycerol 3-phosphate + L-serine = D-glyceraldehyde 3-phosphate + L-tryptophan + H2O. The protein operates within amino-acid biosynthesis; L-tryptophan biosynthesis; L-tryptophan from chorismate: step 5/5. Functionally, the alpha subunit is responsible for the aldol cleavage of indoleglycerol phosphate to indole and glyceraldehyde 3-phosphate. The sequence is that of Tryptophan synthase alpha chain from Legionella pneumophila subsp. pneumophila (strain Philadelphia 1 / ATCC 33152 / DSM 7513).